The primary structure comprises 100 residues: Small ribosomal subunit protein uS14c (100 aa).

This sequence belongs to the universal ribosomal protein uS14 family. Part of the 30S ribosomal subunit.

Its subcellular location is the plastid. It is found in the chloroplast. In terms of biological role, binds 16S rRNA, required for the assembly of 30S particles. The polypeptide is Small ribosomal subunit protein uS14c (Ostreococcus tauri).